A 78-amino-acid polypeptide reads, in one-letter code: Major outer membrane lipoprotein Lpp (78 aa).

The N-terminal stretch at 1-20 is a signal peptide; the sequence is MKATKLVLGAVILGSTLLAG. Cys21 carries N-palmitoyl cysteine lipidation. A lipid anchor (S-diacylglycerol cysteine) is attached at Cys21. Repeats lie at residues 24-34 and 38-48; these read NAKIDQLSSDV and NAKVDQLSNDV. The stretch at 27 to 75 forms a coiled coil; sequence IDQLSSDVQTLNAKVDQLSNDVNAMRSDVQAAKDDAARANQRLDNMATK. Lys78 bears the N6-murein peptidoglycan lysine mark.

This sequence belongs to the Lpp family. Homotrimer.

Its subcellular location is the cell outer membrane. It is found in the secreted. It localises to the cell wall. Its function is as follows. A highly abundant outer membrane lipoprotein that controls the distance between the inner and outer membranes. The only protein known to be covalently linked to the peptidoglycan network (PGN). Also non-covalently binds the PGN. The link between the cell outer membrane and PGN contributes to maintenance of the structural and functional integrity of the cell envelope, and maintains the correct distance between the PGN and the outer membrane. The polypeptide is Major outer membrane lipoprotein Lpp (Shigella flexneri).